The sequence spans 101 residues: Urease subunit beta (101 aa).

It belongs to the urease beta subunit family. Heterotrimer of UreA (gamma), UreB (beta) and UreC (alpha) subunits. Three heterotrimers associate to form the active enzyme.

It is found in the cytoplasm. It carries out the reaction urea + 2 H2O + H(+) = hydrogencarbonate + 2 NH4(+). It participates in nitrogen metabolism; urea degradation; CO(2) and NH(3) from urea (urease route): step 1/1. The sequence is that of Urease subunit beta from Ralstonia nicotianae (strain ATCC BAA-1114 / GMI1000) (Ralstonia solanacearum).